The sequence spans 207 residues: Superoxide dismutase [Fe] (207 aa).

Positions 28, 76, 160, and 164 each coordinate Fe cation.

This sequence belongs to the iron/manganese superoxide dismutase family. In terms of assembly, homotetramer. Requires Fe cation as cofactor.

Its subcellular location is the secreted. The catalysed reaction is 2 superoxide + 2 H(+) = H2O2 + O2. Its function is as follows. Destroys superoxide anion radicals which are normally produced within the cells and which are toxic to biological systems. This Mycobacterium tuberculosis (strain CDC 1551 / Oshkosh) protein is Superoxide dismutase [Fe] (sodB).